We begin with the raw amino-acid sequence, 177 residues long: CRIB domain-containing protein RIC8 (177 aa).

Positions 17-30 constitute a CRIB domain; sequence IGTPTDVKHVAHIG. Basic and acidic residues predominate over residues 72 to 89; sequence STRSRDIPRLPKSSRERS. The segment at 72-177 is disordered; that stretch reads STRSRDIPRL…SSTSDAGYLT (106 aa). The span at 158–171 shows a compositional bias: low complexity; the sequence is GSQVESISDSSSTS.

Functionally, functions as a downstream effector of Rho-related GTP binding proteins of the 'Rho of Plants' (ROPs) family. Participates in the propagation of ROP GTPase signals in specific cellular responses. The protein is CRIB domain-containing protein RIC8 (RIC8) of Arabidopsis thaliana (Mouse-ear cress).